We begin with the raw amino-acid sequence, 140 residues long: ATP synthase epsilon chain (140 aa).

Belongs to the ATPase epsilon chain family. As to quaternary structure, F-type ATPases have 2 components, CF(1) - the catalytic core - and CF(0) - the membrane proton channel. CF(1) has five subunits: alpha(3), beta(3), gamma(1), delta(1), epsilon(1). CF(0) has three main subunits: a, b and c.

It is found in the cell inner membrane. Functionally, produces ATP from ADP in the presence of a proton gradient across the membrane. This chain is ATP synthase epsilon chain, found in Xanthomonas campestris pv. campestris (strain 8004).